Here is a 185-residue protein sequence, read N- to C-terminus: Ribosome-recycling factor (185 aa).

The protein belongs to the RRF family.

The protein localises to the cytoplasm. Responsible for the release of ribosomes from messenger RNA at the termination of protein biosynthesis. May increase the efficiency of translation by recycling ribosomes from one round of translation to another. The polypeptide is Ribosome-recycling factor (Symbiobacterium thermophilum (strain DSM 24528 / JCM 14929 / IAM 14863 / T)).